The following is a 131-amino-acid chain: Profilin (131 aa).

The protein belongs to the profilin family. Occurs in many kinds of cells as a complex with monomeric actin in a 1:1 ratio.

It localises to the cytoplasm. Its subcellular location is the cytoskeleton. Functionally, binds to actin and affects the structure of the cytoskeleton. At high concentrations, profilin prevents the polymerization of actin, whereas it enhances it at low concentrations. By binding to PIP2, it inhibits the formation of IP3 and DG. This is Profilin from Capsicum annuum (Capsicum pepper).